Consider the following 330-residue polypeptide: GTPase Obg (330 aa).

One can recognise an Obg domain in the interval M1 to L159. Positions S160–K327 constitute an OBG-type G domain. Residues G166–S173, F191–V195, D212–G215, N279–D282, and S308–C310 contribute to the GTP site. Mg(2+) contacts are provided by S173 and T193.

It belongs to the TRAFAC class OBG-HflX-like GTPase superfamily. OBG GTPase family. Monomer. It depends on Mg(2+) as a cofactor.

The protein localises to the cytoplasm. An essential GTPase which binds GTP, GDP and possibly (p)ppGpp with moderate affinity, with high nucleotide exchange rates and a fairly low GTP hydrolysis rate. Plays a role in control of the cell cycle, stress response, ribosome biogenesis and in those bacteria that undergo differentiation, in morphogenesis control. This chain is GTPase Obg, found in Rickettsia rickettsii (strain Iowa).